The following is a 341-amino-acid chain: Methionine import ATP-binding protein MetN (341 aa).

Residues 9 to 247 (ISVQKVNKEI…PRSSITEELF (239 aa)) enclose the ABC transporter domain. 41 to 48 (GHSGSGKS) serves as a coordination point for ATP.

It belongs to the ABC transporter superfamily. Methionine importer (TC 3.A.1.24) family. The complex is composed of two ATP-binding proteins (MetN), two transmembrane proteins (MetI) and a solute-binding protein (MetQ).

It is found in the cell inner membrane. The enzyme catalyses L-methionine(out) + ATP + H2O = L-methionine(in) + ADP + phosphate + H(+). The catalysed reaction is D-methionine(out) + ATP + H2O = D-methionine(in) + ADP + phosphate + H(+). Functionally, part of the ABC transporter complex MetNIQ involved in methionine import. Responsible for energy coupling to the transport system. This is Methionine import ATP-binding protein MetN from Chlamydia caviae (strain ATCC VR-813 / DSM 19441 / 03DC25 / GPIC) (Chlamydophila caviae).